Consider the following 513-residue polypeptide: Cytochrome P450 4p1 (513 aa).

Residues Glu-320 and Cys-459 each coordinate heme.

Belongs to the cytochrome P450 family. It depends on heme as a cofactor.

Its subcellular location is the endoplasmic reticulum membrane. It localises to the microsome membrane. Functionally, may be involved in the metabolism of insect hormones and in the breakdown of synthetic insecticides. This Drosophila melanogaster (Fruit fly) protein is Cytochrome P450 4p1 (Cyp4p1).